The sequence spans 156 residues: Small ribosomal subunit protein uS7 (156 aa).

Belongs to the universal ribosomal protein uS7 family. In terms of assembly, part of the 30S ribosomal subunit. Contacts proteins S9 and S11.

Its function is as follows. One of the primary rRNA binding proteins, it binds directly to 16S rRNA where it nucleates assembly of the head domain of the 30S subunit. Is located at the subunit interface close to the decoding center, probably blocks exit of the E-site tRNA. This is Small ribosomal subunit protein uS7 from Ralstonia nicotianae (strain ATCC BAA-1114 / GMI1000) (Ralstonia solanacearum).